The sequence spans 142 residues: NADH-quinone oxidoreductase subunit A 2 (142 aa).

The next 3 helical transmembrane spans lie at 18-38, 73-93, and 104-124; these read FLPLALYTLAASILIGVLLLA, FYLIAIFFIVFDVEAAFIFAW, and GLVHITFFIVILLLGLVWLWL.

The protein belongs to the complex I subunit 3 family. In terms of assembly, NDH-1 is composed of 14 different subunits. Subunits NuoA, H, J, K, L, M, N constitute the membrane sector of the complex.

The protein localises to the cell inner membrane. It catalyses the reaction a quinone + NADH + 5 H(+)(in) = a quinol + NAD(+) + 4 H(+)(out). NDH-1 shuttles electrons from NADH, via FMN and iron-sulfur (Fe-S) centers, to quinones in the respiratory chain. The immediate electron acceptor for the enzyme in this species is believed to be ubiquinone. Couples the redox reaction to proton translocation (for every two electrons transferred, four hydrogen ions are translocated across the cytoplasmic membrane), and thus conserves the redox energy in a proton gradient. The sequence is that of NADH-quinone oxidoreductase subunit A 2 from Geobacter sulfurreducens (strain ATCC 51573 / DSM 12127 / PCA).